The chain runs to 437 residues: MSNRGDRISSLPDELLCQILSNLPTKNAVTTSILSTRWRSIWLSTPVLDIDIDAFDDATTFVSFASRFLEFSKDSCLHKFKLSVERDDVDMCTIMPWIQDAVNRRIQHLEVDCRFSFHFEAVYLTLYLSETLVSLRLHFVTLHRYEFVSLPNLKVMHLEENIYYCLETLENFISSCPVLEDLTVVRIVDIITEKILRVRSRSLNSLKLVLDSSNGWFIDDIDEWKVIIDAPRLAYLSLKDDQSASFVISNLGSSAKADIKVSFNVNDIWDLPVTFERSNVGKLLTGLSSIRDLTISGTTLMIICHYLKHEPMPQFCNMVRLNARFYDCDLEMLPCVLESCPNLKSLVLGLLSSAETEQQSRVSSVPPCFLSSLEFVEIRSRLCRKRYVMKVARYFAKNSVMLKKFVYVGRVSIQEEDLLALLWRYSICEIEVRGLRR.

In terms of domain architecture, F-box spans 5 to 51 (GDRISSLPDELLCQILSNLPTKNAVTTSILSTRWRSIWLSTPVLDID). LRR repeat units lie at residues 86–113 (RDDVDMCTIMPWIQDAVNRRIQHLEVDC), 134–160 (SLRLHFVTLHRYEFVSLPNLKVMHLEE), 161–186 (NIYYCLETLENFISSCPVLEDLTVVR), 187–210 (IVDIITEKILRVRSRSLNSLKLVL), 215–240 (GWFIDDIDEWKVIIDAPRLAYLSLKD), 272–297 (PVTFERSNVGKLLTGLSSIRDLTISG), and 322–350 (NARFYDCDLEMLPCVLESCPNLKSLVLGL). An FBD domain is found at 361–406 (RVSSVPPCFLSSLEFVEIRSRLCRKRYVMKVARYFAKNSVMLKKFV).

This is F-box/FBD/LRR-repeat protein At5g22700 from Arabidopsis thaliana (Mouse-ear cress).